A 60-amino-acid chain; its full sequence is MNKLPILIFMLLVCSMFISSDCQKHTDIKCSSSSSCYEPCRGVTGRAHGKCMNGRCTCYY.

Residues 1 to 22 (MNKLPILIFMLLVCSMFISSDC) form the signal peptide. Cystine bridges form between Cys30–Cys51, Cys36–Cys56, and Cys40–Cys58.

The protein belongs to the short scorpion toxin superfamily. Potassium channel inhibitor family. Alpha-KTx 12 subfamily. In terms of tissue distribution, expressed by the venom gland.

Its subcellular location is the secreted. This recombinant toxin inhibits the mammalian voltage-gated potassium channels Kv1.3/KCNA3 (IC(50)=28 nM). Kv1.1/KCNA1 and Kv1.2/KCNA2 potassium channels are also weakly inhibited (IC(50)=1.73 uM and IC(50)=12.63 uM, respectively). In Lychas mucronatus (Chinese swimming scorpion), this protein is Potassium channel toxin alpha-KTx 12.5.